The following is a 335-amino-acid chain: MAKIIYDNETTFDALKDKTIAIMGYGSQGHAHARNLHESGLNVIVGLRKSSSSWAKAENDGLKVMTVAEAAKAADVIMILLPDENQASVYYSEIAPNLEAGNALAFAHGFNIHYNQIVPPKDVDVFMAAPKGPGHIVRRTYTEGIGVPALIAVYQDATGNAREIALSYVKGIGATRAGVYETTFREETETDLFGEQVDLCGGLSSLIKTAFETLVEAGYQPEMAYFETCHEVKLIVDLIYEGGLERMWHSVSNTAEYGGMTVGPRIINDESREAMREALKRIQNGEFAKEFVLEGMVNHPVLKAMERQEKEHQLEVVGKQIRANIPWLNREIDDD.

In terms of domain architecture, KARI N-terminal Rossmann spans 2-182; the sequence is AKIIYDNETT…GATRAGVYET (181 aa). NADP(+)-binding positions include 25–28, R48, S51, S53, and 83–86; these read YGSQ and DENQ. H108 is a catalytic residue. G134 contributes to the NADP(+) binding site. The KARI C-terminal knotted domain maps to 183–328; that stretch reads TFREETETDL…KQIRANIPWL (146 aa). The Mg(2+) site is built by D191, E195, E227, and E231. Position 252 (S252) interacts with substrate.

The protein belongs to the ketol-acid reductoisomerase family. Mg(2+) serves as cofactor.

It carries out the reaction (2R)-2,3-dihydroxy-3-methylbutanoate + NADP(+) = (2S)-2-acetolactate + NADPH + H(+). The catalysed reaction is (2R,3R)-2,3-dihydroxy-3-methylpentanoate + NADP(+) = (S)-2-ethyl-2-hydroxy-3-oxobutanoate + NADPH + H(+). Its pathway is amino-acid biosynthesis; L-isoleucine biosynthesis; L-isoleucine from 2-oxobutanoate: step 2/4. It functions in the pathway amino-acid biosynthesis; L-valine biosynthesis; L-valine from pyruvate: step 2/4. Involved in the biosynthesis of branched-chain amino acids (BCAA). Catalyzes an alkyl-migration followed by a ketol-acid reduction of (S)-2-acetolactate (S2AL) to yield (R)-2,3-dihydroxy-isovalerate. In the isomerase reaction, S2AL is rearranged via a Mg-dependent methyl migration to produce 3-hydroxy-3-methyl-2-ketobutyrate (HMKB). In the reductase reaction, this 2-ketoacid undergoes a metal-dependent reduction by NADPH to yield (R)-2,3-dihydroxy-isovalerate. The polypeptide is Ketol-acid reductoisomerase (NADP(+)) (Methanosarcina barkeri (strain Fusaro / DSM 804)).